Consider the following 200-residue polypeptide: Small ribosomal subunit protein uS4 (200 aa).

Positions 22–41 are disordered; it reads TGKEIEKRPYAPGQHGPNQR. The region spanning 92 to 152 is the S4 RNA-binding domain; sequence TRLDNLVYRL…EKSQNLAVVG (61 aa).

This sequence belongs to the universal ribosomal protein uS4 family. As to quaternary structure, part of the 30S ribosomal subunit. Contacts protein S5. The interaction surface between S4 and S5 is involved in control of translational fidelity.

One of the primary rRNA binding proteins, it binds directly to 16S rRNA where it nucleates assembly of the body of the 30S subunit. Functionally, with S5 and S12 plays an important role in translational accuracy. This is Small ribosomal subunit protein uS4 from Lysinibacillus sphaericus (strain C3-41).